A 214-amino-acid chain; its full sequence is GTP cyclohydrolase 1 (214 aa).

The Zn(2+) site is built by cysteine 101, histidine 104, and cysteine 172.

The protein belongs to the GTP cyclohydrolase I family. As to quaternary structure, toroid-shaped homodecamer, composed of two pentamers of five dimers.

The enzyme catalyses GTP + H2O = 7,8-dihydroneopterin 3'-triphosphate + formate + H(+). The protein operates within cofactor biosynthesis; 7,8-dihydroneopterin triphosphate biosynthesis; 7,8-dihydroneopterin triphosphate from GTP: step 1/1. The chain is GTP cyclohydrolase 1 from Gloeobacter violaceus (strain ATCC 29082 / PCC 7421).